Consider the following 282-residue polypeptide: ATP synthase gamma chain (282 aa).

The protein belongs to the ATPase gamma chain family. F-type ATPases have 2 components, CF(1) - the catalytic core - and CF(0) - the membrane proton channel. CF(1) has five subunits: alpha(3), beta(3), gamma(1), delta(1), epsilon(1). CF(0) has three main subunits: a, b and c. In this bacterium the a and b subunits are transcribed but do not seem to be translated, thus the ATP synthase consists of the alpha, beta, gamma, delta, epsilon and c subunits.

It is found in the cell membrane. In terms of biological role, produces ATP from ADP in the presence of a proton gradient across the membrane. The gamma chain is believed to be important in regulating ATPase activity and the flow of protons through the CF(0) complex. This is ATP synthase gamma chain from Moorella thermoacetica (strain ATCC 39073 / JCM 9320).